The chain runs to 272 residues: Carbonic anhydrase (272 aa).

Residues cysteine 39, histidine 98, and cysteine 101 each coordinate Zn(2+).

It belongs to the beta-class carbonic anhydrase family. As to quaternary structure, a hexamer formed by a trimer of dimers. Purified from carboxysomes with the both RuBisCO subunits and the full-length form of CcmM, probably interacts with the N-terminus of CcmM. It depends on Zn(2+) as a cofactor.

It localises to the carboxysome. The catalysed reaction is hydrogencarbonate + H(+) = CO2 + H2O. Reversible hydration of carbon dioxide. Essential to photosynthetic carbon dioxide fixation, supplies CO(2) to RuBisCO (ribulose bisphosphate carboxylase, rbcL-rbcS) in the carboxysome. Loss of activity results in limitation of CO(2) availability to RuBisCO located in the cytoplasm. The sequence is that of Carbonic anhydrase from Synechococcus elongatus (strain ATCC 33912 / PCC 7942 / FACHB-805) (Anacystis nidulans R2).